The following is a 796-amino-acid chain: DnaJ homolog subfamily C member 10 (796 aa).

The signal sequence occupies residues M1–C33. Residues D36–G100 enclose the J domain. The region spanning E131–Y233 is the Thioredoxin 1 domain. Residues C159 and C162 are joined by a disulfide bond. 2 trxb regions span residues S236 to L351 and P349 to F464. Thioredoxin domains are found at residues H455–L554, S558–Y668, and A672–R780. C481 and C484 are oxidised to a cystine. N531 carries an N-linked (GlcNAc...) asparagine glycan. 2 disulfides stabilise this stretch: C589–C592 and C701–C704. N753 carries an N-linked (GlcNAc...) asparagine glycan. A Prevents secretion from ER motif is present at residues K793 to L796.

Its subcellular location is the endoplasmic reticulum lumen. In terms of biological role, endoplasmic reticulum disulfide reductase involved both in the correct folding of proteins and degradation of misfolded proteins. Required for efficient folding of proteins in the endoplasmic reticulum by catalyzing the removal of non-native disulfide bonds formed during the folding of proteins. Also involved in endoplasmic reticulum-associated degradation (ERAD) by reducing incorrect disulfide bonds in misfolded glycoproteins. The chain is DnaJ homolog subfamily C member 10 (dnajc10) from Xenopus laevis (African clawed frog).